We begin with the raw amino-acid sequence, 326 residues long: Biotin synthase (326 aa).

The region spanning 41–271 (YHVQLASLLS…EARVRLSAGR (231 aa)) is the Radical SAM core domain. Cysteine 56, cysteine 60, and cysteine 63 together coordinate [4Fe-4S] cluster. Positions 102, 134, 194, and 266 each coordinate [2Fe-2S] cluster.

This sequence belongs to the radical SAM superfamily. Biotin synthase family. Homodimer. [4Fe-4S] cluster serves as cofactor. [2Fe-2S] cluster is required as a cofactor.

It carries out the reaction (4R,5S)-dethiobiotin + (sulfur carrier)-SH + 2 reduced [2Fe-2S]-[ferredoxin] + 2 S-adenosyl-L-methionine = (sulfur carrier)-H + biotin + 2 5'-deoxyadenosine + 2 L-methionine + 2 oxidized [2Fe-2S]-[ferredoxin]. The protein operates within cofactor biosynthesis; biotin biosynthesis; biotin from 7,8-diaminononanoate: step 2/2. Functionally, catalyzes the conversion of dethiobiotin (DTB) to biotin by the insertion of a sulfur atom into dethiobiotin via a radical-based mechanism. This chain is Biotin synthase, found in Synechococcus sp. (strain RCC307).